The chain runs to 148 residues: Deoxyuridine 5'-triphosphate nucleotidohydrolase (148 aa).

Substrate contacts are provided by residues 67–69 (RSG), Asn-80, 84–86 (LID), and Met-94.

It belongs to the dUTPase family. The cofactor is Mg(2+).

It carries out the reaction dUTP + H2O = dUMP + diphosphate + H(+). It functions in the pathway pyrimidine metabolism; dUMP biosynthesis; dUMP from dCTP (dUTP route): step 2/2. Functionally, this enzyme is involved in nucleotide metabolism: it produces dUMP, the immediate precursor of thymidine nucleotides and it decreases the intracellular concentration of dUTP so that uracil cannot be incorporated into DNA. This chain is Deoxyuridine 5'-triphosphate nucleotidohydrolase, found in Burkholderia ambifaria (strain ATCC BAA-244 / DSM 16087 / CCUG 44356 / LMG 19182 / AMMD) (Burkholderia cepacia (strain AMMD)).